Here is a 616-residue protein sequence, read N- to C-terminus: Chaperone protein HscA homolog (616 aa).

This sequence belongs to the heat shock protein 70 family.

In terms of biological role, chaperone involved in the maturation of iron-sulfur cluster-containing proteins. Has a low intrinsic ATPase activity which is markedly stimulated by HscB. The chain is Chaperone protein HscA homolog from Vibrio atlanticus (strain LGP32) (Vibrio splendidus (strain Mel32)).